The chain runs to 466 residues: Trigger factor (466 aa).

The PPIase FKBP-type domain occupies 162-243 (GDVVSIDLSA…VRSVKERELP (82 aa)). Residues 428–466 (GNTIDTSEFFGKRVSAGEAEEAEPADEGAARAASDEATT) are disordered. The span at 457–466 (ARAASDEATT) shows a compositional bias: low complexity.

Belongs to the FKBP-type PPIase family. Tig subfamily.

It localises to the cytoplasm. It carries out the reaction [protein]-peptidylproline (omega=180) = [protein]-peptidylproline (omega=0). Its function is as follows. Involved in protein export. Acts as a chaperone by maintaining the newly synthesized protein in an open conformation. Functions as a peptidyl-prolyl cis-trans isomerase. The protein is Trigger factor of Mycobacterium bovis (strain BCG / Tokyo 172 / ATCC 35737 / TMC 1019).